Reading from the N-terminus, the 379-residue chain is Succinate--CoA ligase [ADP-forming] subunit beta (379 aa).

The region spanning 9-237 (RDILARYGIP…SSDEPEAEQR (229 aa)) is the ATP-grasp domain. Residues Lys-45, 52-54 (GRG), Ile-94, and Glu-99 each bind ATP. Mg(2+) is bound by residues Asn-192 and Asp-206. Substrate contacts are provided by residues Asn-257 and 314–316 (GIT).

This sequence belongs to the succinate/malate CoA ligase beta subunit family. As to quaternary structure, heterotetramer of two alpha and two beta subunits. The cofactor is Mg(2+).

The catalysed reaction is succinate + ATP + CoA = succinyl-CoA + ADP + phosphate. It catalyses the reaction GTP + succinate + CoA = succinyl-CoA + GDP + phosphate. It participates in carbohydrate metabolism; tricarboxylic acid cycle; succinate from succinyl-CoA (ligase route): step 1/1. In terms of biological role, succinyl-CoA synthetase functions in the citric acid cycle (TCA), coupling the hydrolysis of succinyl-CoA to the synthesis of either ATP or GTP and thus represents the only step of substrate-level phosphorylation in the TCA. The beta subunit provides nucleotide specificity of the enzyme and binds the substrate succinate, while the binding sites for coenzyme A and phosphate are found in the alpha subunit. The protein is Succinate--CoA ligase [ADP-forming] subunit beta of Roseiflexus sp. (strain RS-1).